Reading from the N-terminus, the 203-residue chain is Shikimate kinase (203 aa).

Residue 38–43 coordinates ATP; the sequence is GAGKST. S42 is a binding site for Mg(2+). Residues D60, R84, and G106 each coordinate substrate. R144 is an ATP binding site. Position 163 (R163) interacts with substrate.

This sequence belongs to the shikimate kinase family. Monomer. It depends on Mg(2+) as a cofactor.

The protein resides in the cytoplasm. It catalyses the reaction shikimate + ATP = 3-phosphoshikimate + ADP + H(+). It participates in metabolic intermediate biosynthesis; chorismate biosynthesis; chorismate from D-erythrose 4-phosphate and phosphoenolpyruvate: step 5/7. Functionally, catalyzes the specific phosphorylation of the 3-hydroxyl group of shikimic acid using ATP as a cosubstrate. The sequence is that of Shikimate kinase from Rhodopseudomonas palustris (strain ATCC BAA-98 / CGA009).